Reading from the N-terminus, the 115-residue chain is DNA repair protein homolog YozK (115 aa).

The region spanning 12-115 is the UmuC domain; that stretch reads ILCVDMKSFY…EKCVHTYSID (104 aa). Residues aspartate 16 and aspartate 115 each contribute to the Mg(2+) site.

The protein belongs to the DNA polymerase type-Y family. Mg(2+) serves as cofactor.

The polypeptide is DNA repair protein homolog YozK (yozK) (Bacillus subtilis (strain 168)).